The primary structure comprises 554 residues: (Z)-gamma-bisabolene synthase 2 (554 aa).

Residues Asp-306, Asp-310, Asp-450, and Asp-458 each contribute to the Mg(2+) site. The DDXXD motif signature appears at 306–310; that stretch reads DDACD.

The protein belongs to the terpene synthase family. Tpsa subfamily. Requires Mg(2+) as cofactor. It depends on Mn(2+) as a cofactor. As to expression, predominantly expressed in roots. Expressed in the cortex and the sub-epidermal layers of roots. Also detected in leaf hydathodes and flower stigmata.

Its subcellular location is the cytoplasm. It carries out the reaction (2E,6E)-farnesyl diphosphate = (Z)-gamma-bisabolene + diphosphate. It functions in the pathway secondary metabolite biosynthesis; terpenoid biosynthesis. In terms of biological role, involved in sesquiterpene (C15) biosynthesis. The major product is (Z)-gamma-bisabolene with minor amounts of (E)-nerolidol and alpha-bisabolol. This is (Z)-gamma-bisabolene synthase 2 (TPS13) from Arabidopsis thaliana (Mouse-ear cress).